A 205-amino-acid polypeptide reads, in one-letter code: Small ribosomal subunit protein bS16 (205 aa).

Positions 110–205 (GEEVKIAVGT…ADDNEEPEDE (96 aa)) are disordered. Residues 123–132 (DPLERERERA) are compositionally biased toward basic and acidic residues. The segment covering 153–205 (EETEAEEAEDVETADAEDADAASETDEPEAAADEADETDASADADDNEEPEDE) has biased composition (acidic residues).

This sequence belongs to the bacterial ribosomal protein bS16 family.

The polypeptide is Small ribosomal subunit protein bS16 (Salinibacter ruber (strain DSM 13855 / M31)).